The following is a 1036-amino-acid chain: uncharacterized protein (1036 aa).

2 consecutive transmembrane segments (helical) span residues 4-24 and 1004-1024; these read YLFI…NASL and ILWV…VLFL.

It belongs to the MG414/MG415 family.

It is found in the cell membrane. This is an uncharacterized protein from Mycoplasma genitalium (strain ATCC 33530 / DSM 19775 / NCTC 10195 / G37) (Mycoplasmoides genitalium).